We begin with the raw amino-acid sequence, 263 residues long: Putative alpha/beta hydrolase L404 (263 aa).

A lipid anchor (N-myristoyl glycine; by host) is attached at Gly2.

This sequence belongs to the AB hydrolase superfamily.

The protein is Putative alpha/beta hydrolase L404 of Acanthamoeba polyphaga (Amoeba).